The chain runs to 223 residues: MKFAVLVFPGSNCDRDMFNAAIKSGVEAEYVDYRETSLSGFDGVLIPGGFSFGDYLRSGAMASVAPIISEVKRLATEGKPVLGVCNGFQILTEIGLLPGALLHNDSHLFISRNEELEIVNNQTAFTNLYEQGEKVIYPVAHGEGHYYCTDEIYQQLKANNQIILKYVNNPNGSYDDIAGIVNEKGNVCGMMPHPERALETLLGTDSGVKLFEAMVKSWREQHV.

Positions 3 to 223 (FAVLVFPGSN…MVKSWREQHV (221 aa)) constitute a Glutamine amidotransferase type-1 domain. Residue C85 is the Nucleophile of the active site. Catalysis depends on residues H193 and E195.

In terms of assembly, part of the FGAM synthase complex composed of 1 PurL, 1 PurQ and 2 PurS subunits.

The protein resides in the cytoplasm. It carries out the reaction N(2)-formyl-N(1)-(5-phospho-beta-D-ribosyl)glycinamide + L-glutamine + ATP + H2O = 2-formamido-N(1)-(5-O-phospho-beta-D-ribosyl)acetamidine + L-glutamate + ADP + phosphate + H(+). It catalyses the reaction L-glutamine + H2O = L-glutamate + NH4(+). Its pathway is purine metabolism; IMP biosynthesis via de novo pathway; 5-amino-1-(5-phospho-D-ribosyl)imidazole from N(2)-formyl-N(1)-(5-phospho-D-ribosyl)glycinamide: step 1/2. Its function is as follows. Part of the phosphoribosylformylglycinamidine synthase complex involved in the purines biosynthetic pathway. Catalyzes the ATP-dependent conversion of formylglycinamide ribonucleotide (FGAR) and glutamine to yield formylglycinamidine ribonucleotide (FGAM) and glutamate. The FGAM synthase complex is composed of three subunits. PurQ produces an ammonia molecule by converting glutamine to glutamate. PurL transfers the ammonia molecule to FGAR to form FGAM in an ATP-dependent manner. PurS interacts with PurQ and PurL and is thought to assist in the transfer of the ammonia molecule from PurQ to PurL. This is Phosphoribosylformylglycinamidine synthase subunit PurQ from Staphylococcus aureus (strain Mu50 / ATCC 700699).